Consider the following 514-residue polypeptide: Maturase K (514 aa).

It belongs to the intron maturase 2 family. MatK subfamily.

Its subcellular location is the plastid. It localises to the chloroplast. In terms of biological role, usually encoded in the trnK tRNA gene intron. Probably assists in splicing its own and other chloroplast group II introns. This Acer monspessulanum (Montpellier maple) protein is Maturase K.